A 328-amino-acid chain; its full sequence is tRNA U34 carboxymethyltransferase (328 aa).

Carboxy-S-adenosyl-L-methionine-binding positions include lysine 91, tryptophan 105, lysine 110, glycine 130, 181-182, methionine 196, tyrosine 200, and arginine 315; that span reads IE.

It belongs to the class I-like SAM-binding methyltransferase superfamily. CmoB family. As to quaternary structure, homotetramer.

The catalysed reaction is carboxy-S-adenosyl-L-methionine + 5-hydroxyuridine(34) in tRNA = 5-carboxymethoxyuridine(34) in tRNA + S-adenosyl-L-homocysteine + H(+). In terms of biological role, catalyzes carboxymethyl transfer from carboxy-S-adenosyl-L-methionine (Cx-SAM) to 5-hydroxyuridine (ho5U) to form 5-carboxymethoxyuridine (cmo5U) at position 34 in tRNAs. The sequence is that of tRNA U34 carboxymethyltransferase from Pectobacterium carotovorum subsp. carotovorum (strain PC1).